Here is a 602-residue protein sequence, read N- to C-terminus: Elongation factor 4 (602 aa).

One can recognise a tr-type G domain in the interval 7 to 189 (KKIRNFSIIA…SIVKNVPSPK (183 aa)). GTP contacts are provided by residues 19-24 (DHGKST) and 136-139 (NKID).

This sequence belongs to the TRAFAC class translation factor GTPase superfamily. Classic translation factor GTPase family. LepA subfamily.

Its subcellular location is the cell membrane. It carries out the reaction GTP + H2O = GDP + phosphate + H(+). Functionally, required for accurate and efficient protein synthesis under certain stress conditions. May act as a fidelity factor of the translation reaction, by catalyzing a one-codon backward translocation of tRNAs on improperly translocated ribosomes. Back-translocation proceeds from a post-translocation (POST) complex to a pre-translocation (PRE) complex, thus giving elongation factor G a second chance to translocate the tRNAs correctly. Binds to ribosomes in a GTP-dependent manner. This is Elongation factor 4 from Alkaliphilus oremlandii (strain OhILAs) (Clostridium oremlandii (strain OhILAs)).